A 1892-amino-acid polypeptide reads, in one-letter code: Alpha-2-macroglobulin (1892 aa).

An N-terminal signal peptide occupies residues 1–23 (MKNIFRKFVFTIFVCLINLQLIA). Positions 1441 to 1444 (CTEQ) form a cross-link, isoglutamyl cysteine thioester (Cys-Gln).

The protein belongs to the protease inhibitor I39 (alpha-2-macroglobulin) family. Bacterial alpha-2-macroglobulin subfamily.

Its function is as follows. Protects the bacterial cell from host peptidases. The protein is Alpha-2-macroglobulin of Rickettsia conorii (strain ATCC VR-613 / Malish 7).